The chain runs to 207 residues: MQELYLLGVVPSRRFEAVVNSLSKTLDGPKTILEFWVVYRPKDVPPNLPRQPDSWLRLCSNIESHDETDTEWSKNTQWSMYLEGNSEPKREDKCGIRPVNRAKLTNGSVTEFVEKMGYEFSHEYIIQGLEYFFFDTTVRIYQTLIPSQQRSIKPPFHPMNEEQPWILHVYTHVADASNQVAMAKAEANLTKVKTLLSAFCDLKNVRL.

The protein belongs to the Mediator complex subunit 18 family. Component of the Mediator complex. Interacts with med17, prk1 and rbp1.

It is found in the nucleus. In terms of biological role, component of the Mediator complex, a coactivator involved in the regulated transcription of nearly all RNA polymerase II-dependent genes. Mediator functions as a bridge to convey information from gene-specific regulatory proteins to the basal RNA polymerase II transcription machinery. Mediator is recruited to promoters by direct interactions with regulatory proteins and serves as a scaffold for the assembly of a functional preinitiation complex with RNA polymerase II and the general transcription factors. The chain is Mediator of RNA polymerase II transcription subunit 18 (med18) from Schizosaccharomyces pombe (strain 972 / ATCC 24843) (Fission yeast).